Reading from the N-terminus, the 266-residue chain is Hydroxyethylthiazole kinase (266 aa).

Met-43 serves as a coordination point for substrate. ATP contacts are provided by Arg-119 and Thr-166. Gly-193 contributes to the substrate binding site.

It belongs to the Thz kinase family. Requires Mg(2+) as cofactor.

The enzyme catalyses 5-(2-hydroxyethyl)-4-methylthiazole + ATP = 4-methyl-5-(2-phosphooxyethyl)-thiazole + ADP + H(+). It participates in cofactor biosynthesis; thiamine diphosphate biosynthesis; 4-methyl-5-(2-phosphoethyl)-thiazole from 5-(2-hydroxyethyl)-4-methylthiazole: step 1/1. In terms of biological role, catalyzes the phosphorylation of the hydroxyl group of 4-methyl-5-beta-hydroxyethylthiazole (THZ). In Methanococcus maripaludis (strain DSM 14266 / JCM 13030 / NBRC 101832 / S2 / LL), this protein is Hydroxyethylthiazole kinase.